Here is a 75-residue protein sequence, read N- to C-terminus: MYB-like transcription factor ETC3 (75 aa).

The tract at residues 1-20 (MDNHRRTKQPKTNSIVTSSS) is disordered. The Myb-like domain occupies 34-71 (SQEEEDLVSRMHKLVGDRWELIAGRIPGRTAGEIERFW).

Expressed in leaf epidermal cells, stomate guard cells in leaves, cotyledons and hypocotyls, inflorescences, developing seeds and siliques.

The protein resides in the nucleus. Its function is as follows. MYB-type transcription factor involved in epidermal cell fate specification. Acts as a negative regulator of trichome development, including endoreplication, by mediating lateral inhibition. Promotes the formation of hair developing cells in H position in root epidermis, probably by inhibiting non-hair cell formation. May have pleiotropic effects on flowering development and epidermal cell size through the regulation of endoreduplication. This chain is MYB-like transcription factor ETC3 (ETC3), found in Arabidopsis thaliana (Mouse-ear cress).